The primary structure comprises 440 residues: Nuclear hormone receptor family member nhr-130 (440 aa).

The nuclear receptor DNA-binding region spans 34–110; it reads LYTCQVCALP…VGMDPGRFQF (77 aa). 2 NR C4-type zinc fingers span residues 37–57 and 74–93; these read CQVC…CRAC and CKKQ…CKKC. In terms of domain architecture, NR LBD spans 184–439; sequence EKPLIARNNL…FSHPEMFEDT (256 aa).

The protein belongs to the nuclear hormone receptor family.

The protein localises to the nucleus. Its function is as follows. Orphan nuclear receptor. The protein is Nuclear hormone receptor family member nhr-130 (nhr-130) of Caenorhabditis elegans.